The primary structure comprises 700 residues: Elongation factor G (700 aa).

The 277-residue stretch at 10-286 folds into the tr-type G domain; the sequence is NKVRNIGIMA…AVIDYLPNPL (277 aa). GTP-binding positions include 19–26, 83–87, and 137–140; these read AHIDAGKT, DTPGH, and NKMD.

This sequence belongs to the TRAFAC class translation factor GTPase superfamily. Classic translation factor GTPase family. EF-G/EF-2 subfamily.

The protein localises to the cytoplasm. In terms of biological role, catalyzes the GTP-dependent ribosomal translocation step during translation elongation. During this step, the ribosome changes from the pre-translocational (PRE) to the post-translocational (POST) state as the newly formed A-site-bound peptidyl-tRNA and P-site-bound deacylated tRNA move to the P and E sites, respectively. Catalyzes the coordinated movement of the two tRNA molecules, the mRNA and conformational changes in the ribosome. In Rhodococcus opacus (strain B4), this protein is Elongation factor G.